The sequence spans 87 residues: NAD(P)H-quinone oxidoreductase subunit O (87 aa).

The span at 1 to 10 shows a compositional bias: basic and acidic residues; it reads MSEQTGKVDD. The segment at 1–23 is disordered; sequence MSEQTGKVDDSQSPPKVQKKLRK.

The protein belongs to the complex I NdhO subunit family. As to quaternary structure, NDH-1 can be composed of about 15 different subunits; different subcomplexes with different compositions have been identified which probably have different functions.

The protein localises to the cellular thylakoid membrane. It carries out the reaction a plastoquinone + NADH + (n+1) H(+)(in) = a plastoquinol + NAD(+) + n H(+)(out). It catalyses the reaction a plastoquinone + NADPH + (n+1) H(+)(in) = a plastoquinol + NADP(+) + n H(+)(out). Its function is as follows. NDH-1 shuttles electrons from an unknown electron donor, via FMN and iron-sulfur (Fe-S) centers, to quinones in the respiratory and/or the photosynthetic chain. The immediate electron acceptor for the enzyme in this species is believed to be plastoquinone. Couples the redox reaction to proton translocation, and thus conserves the redox energy in a proton gradient. Cyanobacterial NDH-1 also plays a role in inorganic carbon-concentration. The sequence is that of NAD(P)H-quinone oxidoreductase subunit O from Prochlorococcus marinus (strain NATL2A).